Here is a 587-residue protein sequence, read N- to C-terminus: MSSIRVKQYDALIVGAGGAGLRAALEMAQSRQYKVAVVSKVFPTRSHTVSAQGGIAAALGNVVPDKPIWHMFDTVKGSDYLGDQDAIQYMCEQAPPSVYELEHYGLPFSRLDDGRIYQRAFGGHTRDFGKEMARRTCACADRTGHAMLHTLYQKNVEAGTHFYYEWYGIDLVRGAQGGIAGMIAMNMETSELVFFKSRATIFATGGAGRIYETTSNAYTNTGDGIGMVLRAGLPVQDMEFWQFHPTGIYGVGCLITEGARGEGGYLINKDGERFMERYSPHLKDLDCRDVVARSILQEVMAGGGVGPKKDHVLLKLDHLGEKVLRERLPGIIELSEKFANVDITKEPIPILPTCHYMMGGIPTNIHGQALTVDENGKDQIIEGLFAAGECACVSVHGANRLGTNSLLDLVVFGRAIGLHLEEALKTELKHRSENPDDIDAAIARLKRWEKPNNVENPALLRQEMRKAMSEDFGVFREEQKMKQGLERLQKLNERLQRAKLTDTSRTFNNARIEALELDNLMEVSYATAVSAQQRTESRGAHSRYDYKERDDANWLKHTVYFRDGHIAYRPVNMKPKGMDPFPPKSRD.

Residues 15–20, 39–54, and aspartate 223 contribute to the FAD site; these read GAGGAG and SKVF…AQGG. Histidine 47 carries the tele-8alpha-FAD histidine modification. Residues histidine 244 and threonine 256 each coordinate substrate. Catalysis depends on arginine 288, which acts as the Proton acceptor. Substrate is bound at residue histidine 355. An FAD-binding site is contributed by glutamate 389. Arginine 400 is a binding site for substrate. Residue 405–406 participates in FAD binding; sequence SL.

Belongs to the FAD-dependent oxidoreductase 2 family. FRD/SDH subfamily. Part of an enzyme complex containing four subunits: a flavoprotein, an iron-sulfur protein, cytochrome b-556 and a hydrophobic protein. FAD serves as cofactor.

It localises to the cell inner membrane. It carries out the reaction a quinone + succinate = fumarate + a quinol. The protein operates within carbohydrate metabolism; tricarboxylic acid cycle; fumarate from succinate (bacterial route): step 1/1. This is Succinate dehydrogenase flavoprotein subunit (sdhA) from Coxiella burnetii (strain RSA 493 / Nine Mile phase I).